A 764-amino-acid polypeptide reads, in one-letter code: MGSNLSPQLCLMPFILGLLSGGVTTTPWSLARPQGSCSLEGVEIKGGSFRLLQEGQALEYVCPSGFYPYPVQTRTCRSTGSWSTLKTQDQKTVRKAECRAIHCPRPHDFENGEYWPRSPYYNVSDEISFHCYDGYTLRGSANRTCQVNGRWSGQTAICDNGAGYCSNPGIPIGTRKVGSQYRLEDSVTYHCSRGLTLRGSQRRTCQEGGSWSGTEPSCQDSFMYDTPQEVAEAFLSSLTETIEGVDAEDGHGPGEQQKRKIVLDPSGSMNIYLVLDGSDSIGASNFTGAKKCLVNLIEKVASYGVKPRYGLVTYATYPKIWVKVSEADSSNADWVTKQLNEINYEDHKLKSGTNTKKALQAVYSMMSWPDDVPPEGWNRTRHVIILMTDGLHNMGGDPITVIDEIRDLLYIGKDRKNPREDYLDVYVFGVGPLVNQVNINALASKKDNEQHVFKVKDMENLEDVFYQMIDESQSLSLCGMVWEHRKGTDYHKQPWQAKISVIRPSKGHESCMGAVVSEYFVLTAAHCFTVDDKEHSIKVSVGGEKRDLEIEVVLFHPNYNINGKKEAGIPEFYDYDVALIKLKNKLKYGQTIRPICLPCTEGTTRALRLPPTTTCQQQKEELLPAQDIKALFVSEEEKKLTRKEVYIKNGDKKGSCERDAQYAPGYDKVKDISEVVTPRFLCTGGVSPYADPNTCRGDSGGPLIVHKRSRFIQVGVISWGVVDVCKNQKRQKQVPAHARDFHINLFQVLPWLKEKLQDEDLGFL.

An N-terminal signal peptide occupies residues 1-25 (MGSNLSPQLCLMPFILGLLSGGVTT). 3 consecutive Sushi domains span residues 35–100 (GSCS…ECRA), 101–160 (IHCP…ICDN), and 163–220 (GYCS…SCQD). Intrachain disulfides connect C37-C76, C62-C98, C103-C145, C131-C158, C165-C205, and C191-C218. N122 and N142 each carry an N-linked (GlcNAc...) asparagine glycan. The 200-residue stretch at 270–469 (NIYLVLDGSD…NLEDVFYQMI (200 aa)) folds into the VWFA domain. Mg(2+)-binding residues include S278 and S280. Mn(2+) is bound by residues S278 and S280. Residue N285 is glycosylated (N-linked (GlcNAc...) asparagine). N-linked (Glc) (glycation) lysine glycosylation is present at K291. T353 is a binding site for Mg(2+). Mn(2+) is bound at residue T353. N378 carries N-linked (GlcNAc...) asparagine glycosylation. The 281-residue stretch at 477–757 (LCGMVWEHRK…VLPWLKEKLQ (281 aa)) folds into the Peptidase S1 domain. 5 disulfide bridges follow: C478-C596, C511-C527, C599-C615, C656-C682, and C695-C725. Residues H526 and D576 each act as charge relay system in the active site. S699 acts as the Charge relay system in catalysis.

Belongs to the peptidase S1 family. Monomer. Interacts with complement C3b; this interaction is dependent on the presence of Mg(2+). As to quaternary structure, catalytic component of the C3 convertase of the alternative complement pathway, also named C3bBb, composed of complement factor B Bb and complement C3b. Catalytic component of the C5 convertase of the alternative complement pathway, also named C3bBb3b, composed of complement factor B Bb and additional molecules of complement C3b. Interacts to CFP; this interaction contributes to the stabilization of the active C3-convertase enzyme complex. Mg(2+) is required as a cofactor. The cofactor is Mn(2+). Post-translationally, cleaved by CFD following activation of the alternative complement system, generating Ba and Bb chains. Cleavage and activation takes place when CFB is already associated with complement C3b.

Its subcellular location is the secreted. It is found in the cell surface. It catalyses the reaction Cleavage of Arg-|-Ser bond in complement component C3 alpha-chain to yield C3a and C3b, and Arg-|-Xaa bond in complement component C5 alpha-chain to yield C5a and C5b.. Precursor of the catalytic component of the C3 and C5 convertase complexes of the alternative pathway of the complement system, a cascade of proteins that leads to phagocytosis and breakdown of pathogens and signaling that strengthens the adaptive immune system. The alternative complement pathway acts as an amplification loop that enhances other complement pathways (classical, lectin and GZMK) by promoting formation of additional C3 and C5 convertases. CFB is cleaved and activated by CFD to generate Ba and Bb chains; Bb chain constituting the catalytic component of the C3 and C5 convertases. Its function is as follows. Serine protease component of the complement C3 and C5 convertase complexes of the alternative complement pathway. Following cleavage and activation by factor D (CFD), forms the C3 convertase together with complement C3b. As part of the C3 convertase, cleaves and activates C3 into C3a anaphylatoxin and C3b opsonin, the next components of the complement pathways. When an additional complement C3b molecule binds to the C3 convertase, forms the C5 convertase, which cleaves and activates C5 into C5a anaphylatoxin and C5b component of the membrane attack complex. Functionally, involved in proliferation and differentiation of preactivated B-lymphocytes, rapid spreading of peripheral blood monocytes, stimulation of lymphocyte blastogenesis and lysis of erythrocytes. In Homo sapiens (Human), this protein is Complement factor B.